We begin with the raw amino-acid sequence, 262 residues long: 3-methyl-2-oxobutanoate hydroxymethyltransferase (262 aa).

Mg(2+) contacts are provided by Asp-43 and Asp-82. Residues 43–44, Asp-82, and Lys-110 contribute to the 3-methyl-2-oxobutanoate site; that span reads DS. Glu-112 is a Mg(2+) binding site. Glu-179 acts as the Proton acceptor in catalysis.

This sequence belongs to the PanB family. In terms of assembly, homodecamer; pentamer of dimers. Mg(2+) serves as cofactor.

The protein localises to the cytoplasm. It catalyses the reaction 3-methyl-2-oxobutanoate + (6R)-5,10-methylene-5,6,7,8-tetrahydrofolate + H2O = 2-dehydropantoate + (6S)-5,6,7,8-tetrahydrofolate. It functions in the pathway cofactor biosynthesis; (R)-pantothenate biosynthesis; (R)-pantoate from 3-methyl-2-oxobutanoate: step 1/2. Functionally, catalyzes the reversible reaction in which hydroxymethyl group from 5,10-methylenetetrahydrofolate is transferred onto alpha-ketoisovalerate to form ketopantoate. The sequence is that of 3-methyl-2-oxobutanoate hydroxymethyltransferase from Sodalis glossinidius (strain morsitans).